The sequence spans 372 residues: Glutamate 5-kinase (372 aa).

K14 serves as a coordination point for ATP. S54, D141, and N153 together coordinate substrate. 173 to 174 contacts ATP; sequence TD. Positions 280–358 constitute a PUA domain; sequence RGTVVIDDGA…SQIESLLGYS (79 aa).

This sequence belongs to the glutamate 5-kinase family.

It localises to the cytoplasm. The catalysed reaction is L-glutamate + ATP = L-glutamyl 5-phosphate + ADP. The protein operates within amino-acid biosynthesis; L-proline biosynthesis; L-glutamate 5-semialdehyde from L-glutamate: step 1/2. Its function is as follows. Catalyzes the transfer of a phosphate group to glutamate to form L-glutamate 5-phosphate. This is Glutamate 5-kinase from Methylibium petroleiphilum (strain ATCC BAA-1232 / LMG 22953 / PM1).